The chain runs to 940 residues: Glutamate receptor 2.9 (940 aa).

An N-terminal signal peptide occupies residues 1 to 23 (MKTNNTFLSYFVCGFLLMGVGLG). The Extracellular segment spans residues 24-566 (QNQTSEIKVG…DTWVFLEPWS (543 aa)). Residues asparagine 25, asparagine 39, asparagine 115, asparagine 338, asparagine 345, and asparagine 528 are each glycosylated (N-linked (GlcNAc...) asparagine). Residues 567-587 (LELWVTTGCFFVFIGFVVWLF) traverse the membrane as a helical segment. At 588–596 (EHRVNTDFR) the chain is on the cytoplasmic side. The helical transmembrane segment at 597–617 (GPPQYQIGTSLWFSFSTMVFA) threads the bilayer. Residues 618-628 (HRENVVSNLAR) are Cytoplasmic-facing. The helical transmembrane segment at 629–649 (FVVVVWCFVVLVLTQSYTASL) threads the bilayer. Topologically, residues 650–811 (TSFLTVQSLQ…NRLNLSSFLG (162 aa)) are extracellular. Residues asparagine 771, asparagine 776, and asparagine 805 are each glycosylated (N-linked (GlcNAc...) asparagine). A helical transmembrane segment spans residues 812–832 (LFLIAGTAISFSLLVFVALFL). Over 833–940 (YEHRHTLGDD…ESDIECRVEQ (108 aa)) the chain is Cytoplasmic. 2 disordered regions span residues 876–900 (ISSP…QSPS) and 914–940 (PSEE…RVEQ).

The protein belongs to the glutamate-gated ion channel (TC 1.A.10.1) family. In terms of assembly, may form heteromers. Expressed predominantly in roots.

The protein resides in the membrane. Its function is as follows. Glutamate-gated receptor that probably acts as a non-selective cation channel. May be involved in light-signal transduction and calcium homeostasis via the regulation of calcium influx into cells. In Arabidopsis thaliana (Mouse-ear cress), this protein is Glutamate receptor 2.9 (GLR2.9).